The chain runs to 265 residues: 5'-nucleotidase SurE (265 aa).

Positions 8, 9, 39, and 96 each coordinate a divalent metal cation.

The protein belongs to the SurE nucleotidase family. Requires a divalent metal cation as cofactor.

The protein resides in the cytoplasm. It catalyses the reaction a ribonucleoside 5'-phosphate + H2O = a ribonucleoside + phosphate. Its function is as follows. Nucleotidase that shows phosphatase activity on nucleoside 5'-monophosphates. The sequence is that of 5'-nucleotidase SurE from Dehalococcoides mccartyi (strain CBDB1).